Consider the following 201-residue polypeptide: Large ribosomal subunit protein uL4 (201 aa).

A disordered region spans residues 44–71 (RAQKTRAEVTGSGKKPWRQKGTGRARSG).

The protein belongs to the universal ribosomal protein uL4 family. As to quaternary structure, part of the 50S ribosomal subunit.

One of the primary rRNA binding proteins, this protein initially binds near the 5'-end of the 23S rRNA. It is important during the early stages of 50S assembly. It makes multiple contacts with different domains of the 23S rRNA in the assembled 50S subunit and ribosome. In terms of biological role, forms part of the polypeptide exit tunnel. This Shigella flexneri serotype 5b (strain 8401) protein is Large ribosomal subunit protein uL4.